The sequence spans 250 residues: Ubiquinone/menaquinone biosynthesis C-methyltransferase UbiE (250 aa).

S-adenosyl-L-methionine-binding positions include Thr-74, Asp-94, 122–123, and Ser-139; that span reads DA.

Belongs to the class I-like SAM-binding methyltransferase superfamily. MenG/UbiE family.

The catalysed reaction is a 2-demethylmenaquinol + S-adenosyl-L-methionine = a menaquinol + S-adenosyl-L-homocysteine + H(+). It carries out the reaction a 2-methoxy-6-(all-trans-polyprenyl)benzene-1,4-diol + S-adenosyl-L-methionine = a 5-methoxy-2-methyl-3-(all-trans-polyprenyl)benzene-1,4-diol + S-adenosyl-L-homocysteine + H(+). It functions in the pathway quinol/quinone metabolism; menaquinone biosynthesis; menaquinol from 1,4-dihydroxy-2-naphthoate: step 2/2. The protein operates within cofactor biosynthesis; ubiquinone biosynthesis. Methyltransferase required for the conversion of demethylmenaquinol (DMKH2) to menaquinol (MKH2) and the conversion of 2-polyprenyl-6-methoxy-1,4-benzoquinol (DDMQH2) to 2-polyprenyl-3-methyl-6-methoxy-1,4-benzoquinol (DMQH2). This is Ubiquinone/menaquinone biosynthesis C-methyltransferase UbiE from Paracoccus denitrificans (strain Pd 1222).